The chain runs to 271 residues: 2,3,4,5-tetrahydropyridine-2,6-dicarboxylate N-succinyltransferase (271 aa).

Substrate-binding residues include R102 and D139.

Belongs to the transferase hexapeptide repeat family. In terms of assembly, homotrimer.

It localises to the cytoplasm. The enzyme catalyses (S)-2,3,4,5-tetrahydrodipicolinate + succinyl-CoA + H2O = (S)-2-succinylamino-6-oxoheptanedioate + CoA. It functions in the pathway amino-acid biosynthesis; L-lysine biosynthesis via DAP pathway; LL-2,6-diaminopimelate from (S)-tetrahydrodipicolinate (succinylase route): step 1/3. The polypeptide is 2,3,4,5-tetrahydropyridine-2,6-dicarboxylate N-succinyltransferase (Coxiella burnetii (strain RSA 331 / Henzerling II)).